A 246-amino-acid chain; its full sequence is DNA repair protein RecO (246 aa).

Belongs to the RecO family.

Functionally, involved in DNA repair and RecF pathway recombination. This chain is DNA repair protein RecO, found in Pelobacter propionicus (strain DSM 2379 / NBRC 103807 / OttBd1).